The sequence spans 205 residues: Dephospho-CoA kinase (205 aa).

Positions 5–201 constitute a DPCK domain; that stretch reads VVGLTGGIGS…QRYLQLSGNH (197 aa). 13–18 serves as a coordination point for ATP; sequence GSGKTT.

This sequence belongs to the CoaE family.

It localises to the cytoplasm. It carries out the reaction 3'-dephospho-CoA + ATP = ADP + CoA + H(+). Its pathway is cofactor biosynthesis; coenzyme A biosynthesis; CoA from (R)-pantothenate: step 5/5. In terms of biological role, catalyzes the phosphorylation of the 3'-hydroxyl group of dephosphocoenzyme A to form coenzyme A. This is Dephospho-CoA kinase from Shewanella oneidensis (strain ATCC 700550 / JCM 31522 / CIP 106686 / LMG 19005 / NCIMB 14063 / MR-1).